The primary structure comprises 461 residues: MAQVLTEFDTIAAISTPIGEGGISIVRMSGEDAIKIANEVFKGADLAQVPTHTIHYGHIIDPDTGKTIDESMVTVLRAPKTFTCEDIVEINCHGGIVVTNHILQLLLKHGARMADPGEFTKRAFVNGRIDLTQAESVMDIVRAKTDKARQVAVSQLEGGLLHKIRTMRQEILDTLANVEVNIDYPEYDADTVTANQMADTAKSVIEKIDRLLKTAQEGKILRNGLATAIVGQPNVGKSSLLNYLTQSDKAIVTDVAGTTRDTLEEYVSVKGVPLELIDTAGIHHTDDKVEKIGVERSKKALERADLVLLLIDASKELTAEDKSLINETDSKKRIIILNKSDLGQKITVEQMKKLTGSEVISTSILKEDNMDELEELINKLFFAGIENSNDQVMVTNQRQTSLLHKAKSELEDVIQAVDDGIPVDIAQIDFTGAWDTLGEITGESAPDELITQLFSQFCLGK.

Residues R27, E89, and R128 each contribute to the (6S)-5-formyl-5,6,7,8-tetrahydrofolate site. In terms of domain architecture, TrmE-type G spans 224 to 382; it reads GLATAIVGQP…LEELINKLFF (159 aa). Position 234 (N234) interacts with K(+). GTP-binding positions include 234 to 239, 253 to 259, and 278 to 281; these read NVGKSS, TDVAGTT, and DTAG. Residue S238 participates in Mg(2+) binding. T253, V255, and T258 together coordinate K(+). T259 contributes to the Mg(2+) binding site. A (6S)-5-formyl-5,6,7,8-tetrahydrofolate-binding site is contributed by K461.

It belongs to the TRAFAC class TrmE-Era-EngA-EngB-Septin-like GTPase superfamily. TrmE GTPase family. Homodimer. Heterotetramer of two MnmE and two MnmG subunits. K(+) is required as a cofactor.

The protein localises to the cytoplasm. Exhibits a very high intrinsic GTPase hydrolysis rate. Involved in the addition of a carboxymethylaminomethyl (cmnm) group at the wobble position (U34) of certain tRNAs, forming tRNA-cmnm(5)s(2)U34. The chain is tRNA modification GTPase MnmE from Lactobacillus acidophilus (strain ATCC 700396 / NCK56 / N2 / NCFM).